A 459-amino-acid chain; its full sequence is Cysteine--tRNA ligase (459 aa).

Cys28 lines the Zn(2+) pocket. Residues 30-40 (VTIYDLCHIGH) carry the 'HIGH' region motif. The Zn(2+) site is built by Cys209, His234, and Glu238. The 'KMSKS' region motif lies at 266–270 (KMSKS). Residue Lys269 participates in ATP binding.

It belongs to the class-I aminoacyl-tRNA synthetase family. As to quaternary structure, monomer. It depends on Zn(2+) as a cofactor.

The protein resides in the cytoplasm. The enzyme catalyses tRNA(Cys) + L-cysteine + ATP = L-cysteinyl-tRNA(Cys) + AMP + diphosphate. This Shewanella loihica (strain ATCC BAA-1088 / PV-4) protein is Cysteine--tRNA ligase.